The following is a 450-amino-acid chain: UDP-N-acetylmuramoylalanine--D-glutamate ligase (450 aa).

Position 111-117 (111-117 (GTNGKST)) interacts with ATP.

Belongs to the MurCDEF family.

The protein resides in the cytoplasm. The catalysed reaction is UDP-N-acetyl-alpha-D-muramoyl-L-alanine + D-glutamate + ATP = UDP-N-acetyl-alpha-D-muramoyl-L-alanyl-D-glutamate + ADP + phosphate + H(+). It participates in cell wall biogenesis; peptidoglycan biosynthesis. Cell wall formation. Catalyzes the addition of glutamate to the nucleotide precursor UDP-N-acetylmuramoyl-L-alanine (UMA). This is UDP-N-acetylmuramoylalanine--D-glutamate ligase from Rickettsia bellii (strain RML369-C).